A 397-amino-acid polypeptide reads, in one-letter code: Acetate kinase (397 aa).

Asparagine 7 lines the Mg(2+) pocket. Lysine 14 is an ATP binding site. Arginine 88 provides a ligand contact to substrate. Aspartate 145 functions as the Proton donor/acceptor in the catalytic mechanism. Residues 205 to 209 (HLGNG), 279 to 281 (DMR), and 326 to 330 (GIGEN) contribute to the ATP site. Glutamate 380 is a Mg(2+) binding site.

Belongs to the acetokinase family. In terms of assembly, homodimer. Mg(2+) serves as cofactor. The cofactor is Mn(2+).

It localises to the cytoplasm. It carries out the reaction acetate + ATP = acetyl phosphate + ADP. Its pathway is metabolic intermediate biosynthesis; acetyl-CoA biosynthesis; acetyl-CoA from acetate: step 1/2. In terms of biological role, catalyzes the formation of acetyl phosphate from acetate and ATP. Can also catalyze the reverse reaction. This Campylobacter concisus (strain 13826) protein is Acetate kinase.